We begin with the raw amino-acid sequence, 1085 residues long: Error-prone DNA polymerase 2 (1085 aa).

A disordered region spans residues 1040 to 1066 (AGRGDEFAHGGGGPDSRDRQKPVVPRD).

It belongs to the DNA polymerase type-C family. DnaE2 subfamily.

The protein resides in the cytoplasm. The catalysed reaction is DNA(n) + a 2'-deoxyribonucleoside 5'-triphosphate = DNA(n+1) + diphosphate. Its function is as follows. DNA polymerase involved in damage-induced mutagenesis and translesion synthesis (TLS). It is not the major replicative DNA polymerase. The sequence is that of Error-prone DNA polymerase 2 from Agrobacterium fabrum (strain C58 / ATCC 33970) (Agrobacterium tumefaciens (strain C58)).